Consider the following 642-residue polypeptide: Medium-chain-fatty-acid--[acyl-carrier-protein] ligase TtuA (642 aa).

Belongs to the ATP-dependent AMP-binding enzyme family.

It carries out the reaction a medium-chain fatty acid + holo-[ACP] + ATP = a medium-chain fatty acyl-[ACP] + AMP + diphosphate. The catalysed reaction is a medium-chain fatty acid + ATP + H(+) = a medium-chain fatty acyl-AMP + diphosphate. The enzyme catalyses a medium-chain fatty acyl-AMP + holo-[ACP] = a medium-chain fatty acyl-[ACP] + AMP + H(+). It catalyses the reaction decanoate + holo-[ACP] + ATP = decanoyl-[ACP] + AMP + diphosphate. It carries out the reaction decanoate + ATP + H(+) = decanoyl-AMP + diphosphate. The catalysed reaction is decanoyl-AMP + holo-[ACP] = decanoyl-[ACP] + AMP + H(+). Functionally, ligase likely involved in the biosynthesis of a polyyne metabolite. Catalyzes the activation of decanoic acid, followed by the loading of the activated decanoic acid onto the acyl carrier protein TtuC. Decanoic acid is the preferred substrate, but it can also use 10-undecenoic acid and lauric acid. Nonanoic acid and 7-octenoic acid are only weakly activated. The polypeptide is Medium-chain-fatty-acid--[acyl-carrier-protein] ligase TtuA (Teredinibacter turnerae (strain ATCC 39867 / T7901)).